The primary structure comprises 94 residues: DNA-directed RNA polymerase subunit omega (94 aa).

Belongs to the RNA polymerase subunit omega family. As to quaternary structure, the RNAP catalytic core consists of 2 alpha, 1 beta, 1 beta' and 1 omega subunit. When a sigma factor is associated with the core the holoenzyme is formed, which can initiate transcription.

It catalyses the reaction RNA(n) + a ribonucleoside 5'-triphosphate = RNA(n+1) + diphosphate. Promotes RNA polymerase assembly. Latches the N- and C-terminal regions of the beta' subunit thereby facilitating its interaction with the beta and alpha subunits. This Parafrankia sp. (strain EAN1pec) protein is DNA-directed RNA polymerase subunit omega.